Reading from the N-terminus, the 344-residue chain is Dihydroorotase (344 aa).

Residues His-13 and His-15 each contribute to the Zn(2+) site. Residues 15–17 and Asn-41 contribute to the substrate site; that span reads HFR. Positions 98, 135, and 173 each coordinate Zn(2+). Lys-98 is modified (N6-carboxylysine). His-135 provides a ligand contact to substrate. Leu-218 lines the substrate pocket. Asp-246 contributes to the Zn(2+) binding site. Residue Asp-246 is part of the active site. His-250 and Ala-262 together coordinate substrate.

This sequence belongs to the metallo-dependent hydrolases superfamily. DHOase family. Class II DHOase subfamily. Homodimer. It depends on Zn(2+) as a cofactor.

It catalyses the reaction (S)-dihydroorotate + H2O = N-carbamoyl-L-aspartate + H(+). It participates in pyrimidine metabolism; UMP biosynthesis via de novo pathway; (S)-dihydroorotate from bicarbonate: step 3/3. Catalyzes the reversible cyclization of carbamoyl aspartate to dihydroorotate. In Shewanella woodyi (strain ATCC 51908 / MS32), this protein is Dihydroorotase.